The following is a 988-amino-acid chain: Transcriptional regulator of yeast form adherence 5 (988 aa).

2 consecutive C2H2-type zinc fingers follow at residues 7 to 29 and 35 to 59; these read YICA…ERSH and FHCL…TVHH. Residues 59–83 show a composition bias toward polar residues; sequence HTNLNPSTLPSNKSLKNPTTNPLDL. 2 disordered regions span residues 59 to 129 and 174 to 229; these read HTNL…SSVG and SMES…SNNN. Positions 84 to 106 are enriched in low complexity; it reads SNNEGTTTTTKTGNRKNNSNKNG. 2 stretches are compositionally biased toward polar residues: residues 113–129 and 174–208; these read TNPN…SSVG and SMES…EIVL.

The protein localises to the nucleus. In terms of biological role, transcription factor required for yeast cell adherence to silicone substrate. This is Transcriptional regulator of yeast form adherence 5 (TRY5) from Candida albicans (strain SC5314 / ATCC MYA-2876) (Yeast).